We begin with the raw amino-acid sequence, 465 residues long: ATP synthase subunit beta (465 aa).

Residue 152 to 159 (GGAGVGKT) coordinates ATP.

It belongs to the ATPase alpha/beta chains family. F-type ATPases have 2 components, CF(1) - the catalytic core - and CF(0) - the membrane proton channel. CF(1) has five subunits: alpha(3), beta(3), gamma(1), delta(1), epsilon(1). CF(0) has three main subunits: a(1), b(2) and c(9-12). The alpha and beta chains form an alternating ring which encloses part of the gamma chain. CF(1) is attached to CF(0) by a central stalk formed by the gamma and epsilon chains, while a peripheral stalk is formed by the delta and b chains.

The protein resides in the cell inner membrane. The enzyme catalyses ATP + H2O + 4 H(+)(in) = ADP + phosphate + 5 H(+)(out). Produces ATP from ADP in the presence of a proton gradient across the membrane. The catalytic sites are hosted primarily by the beta subunits. This chain is ATP synthase subunit beta, found in Campylobacter hominis (strain ATCC BAA-381 / DSM 21671 / CCUG 45161 / LMG 19568 / NCTC 13146 / CH001A).